The primary structure comprises 201 residues: MIGRLRGELVSKQPPFLLLDVQGVGYEIEAPLSTFYDLPEPGGQVTLHTHLHVREDAHVLYGFASESERALFRSLIKVTGVGAKMALAILSGMTASEFSRCVMDGDVASLVRLPGIGRKTAERLVVEMRDRLGSLPAAVTLTGGKPAAAAARAPDPVSDAVSALVSLGYKPQEASRLISAVEGEAERSEDLIRLALKATLK.

The domain I stretch occupies residues 1 to 64 (MIGRLRGELV…EDAHVLYGFA (64 aa)). The tract at residues 65–143 (SESERALFRS…SLPAAVTLTG (79 aa)) is domain II. A flexible linker region spans residues 144-153 (GKPAAAAARA). Residues 153–201 (APDPVSDAVSALVSLGYKPQEASRLISAVEGEAERSEDLIRLALKATLK) form a domain III region.

It belongs to the RuvA family. Homotetramer. Forms an RuvA(8)-RuvB(12)-Holliday junction (HJ) complex. HJ DNA is sandwiched between 2 RuvA tetramers; dsDNA enters through RuvA and exits via RuvB. An RuvB hexamer assembles on each DNA strand where it exits the tetramer. Each RuvB hexamer is contacted by two RuvA subunits (via domain III) on 2 adjacent RuvB subunits; this complex drives branch migration. In the full resolvosome a probable DNA-RuvA(4)-RuvB(12)-RuvC(2) complex forms which resolves the HJ.

It is found in the cytoplasm. Functionally, the RuvA-RuvB-RuvC complex processes Holliday junction (HJ) DNA during genetic recombination and DNA repair, while the RuvA-RuvB complex plays an important role in the rescue of blocked DNA replication forks via replication fork reversal (RFR). RuvA specifically binds to HJ cruciform DNA, conferring on it an open structure. The RuvB hexamer acts as an ATP-dependent pump, pulling dsDNA into and through the RuvAB complex. HJ branch migration allows RuvC to scan DNA until it finds its consensus sequence, where it cleaves and resolves the cruciform DNA. The polypeptide is Holliday junction branch migration complex subunit RuvA (Thioalkalivibrio sulfidiphilus (strain HL-EbGR7)).